We begin with the raw amino-acid sequence, 914 residues long: Polyribonucleotide nucleotidyltransferase (914 aa).

The segment at 407 to 427 (YMHNYEMPPYSTGETGRVGSP) is disordered. 2 residues coordinate Mg(2+): Asp-521 and Asp-527. The region spanning 587-646 (PRIITTSVPVEKIGEVIGPKGKMINQIQEDTGAEIAIEDDGTVFISSEGGEAAKKAKSII) is the KH domain. An S1 motif domain is found at 658–730 (GETYNGKVVK…DRGKISLAIP (73 aa)). The interval 727-914 (LAIPGFEDQE…VRRDFDPFED (188 aa)) is disordered. 3 stretches are compositionally biased toward basic and acidic residues: residues 742–789 (SRGD…RRSD), 797–865 (DRPR…DRRG), and 873–899 (RGSD…ERTE).

It belongs to the polyribonucleotide nucleotidyltransferase family. Mg(2+) serves as cofactor.

Its subcellular location is the cytoplasm. The enzyme catalyses RNA(n+1) + phosphate = RNA(n) + a ribonucleoside 5'-diphosphate. Functionally, involved in mRNA degradation. Catalyzes the phosphorolysis of single-stranded polyribonucleotides processively in the 3'- to 5'-direction. The sequence is that of Polyribonucleotide nucleotidyltransferase from Bifidobacterium longum subsp. infantis (strain ATCC 15697 / DSM 20088 / JCM 1222 / NCTC 11817 / S12).